Consider the following 278-residue polypeptide: E3 ubiquitin-protein ligase CHIP (278 aa).

TPR repeat units lie at residues 10–43 (AERL…SPNV), 45–77 (AYWT…VHNS), and 78–111 (VKAH…GRCS). Residues 143-194 (ELNSLKETCEAALNQQRALDMSRTEESSDEAYTAHTERLKALERVFKKAAEE) adopt a coiled-coil conformation. The U-box domain maps to 199–273 (EVPDYLCCNI…AAYLEKHVWA (75 aa)).

As to quaternary structure, interacts with HSC70-4, PP2AA1, PP2AA3 and PP2A5, as well as with UBC8, UBC9 and UBC10. Also interacts with the chloroplastic proteolytic subunits ClpP4, FtsH1 and FtsH2.

The enzyme catalyses S-ubiquitinyl-[E2 ubiquitin-conjugating enzyme]-L-cysteine + [acceptor protein]-L-lysine = [E2 ubiquitin-conjugating enzyme]-L-cysteine + N(6)-ubiquitinyl-[acceptor protein]-L-lysine.. It participates in protein modification; protein ubiquitination. In terms of biological role, has E3 ubiquitin-protein ligase activity and may target misfolded substrates towards proteasomal degradation. Regulates the activity of some serine/threonine-protein phosphatases by E3 ubiquitin-protein ligase activity. Required for responses to biotic and abiotic stresses such as auxin, abscisic acid (ABA), low and high temperature and darkness, probably through the activation of serine/threonine-protein phosphatase and the subsequent modification of the plasma membrane composition. Regulates the chloroplastic Clp proteolytic activity in response to stresses. Ubiquitylates FtsH1, a component of the chloroplast FtsH protease, and affects protein degradation in chloroplasts. Mediates plastid precursor degradation to prevent cytosolic precursor accumulation, together with the molecular chaperone HSC70-4. Mediates ubiquitination of transit peptides and thereby led to their degradation through the ubiquitin-proteasome system. In Arabidopsis thaliana (Mouse-ear cress), this protein is E3 ubiquitin-protein ligase CHIP.